The primary structure comprises 229 residues: Ribosomal RNA small subunit methyltransferase G (229 aa).

S-adenosyl-L-methionine is bound by residues Gly71, Ala122 to Glu123, and Arg139.

The protein belongs to the methyltransferase superfamily. RNA methyltransferase RsmG family.

It is found in the cytoplasm. Specifically methylates the N7 position of a guanine in 16S rRNA. This chain is Ribosomal RNA small subunit methyltransferase G, found in Thermotoga neapolitana (strain ATCC 49049 / DSM 4359 / NBRC 107923 / NS-E).